A 104-amino-acid chain; its full sequence is MNLQDVILTPVVTEKSQDLETIGANSKKGTRMVKYTVKVHVDANKTLIKEAFKKIFKVTPSSVNVQVYRGKIKRFRNMPAPRPHWKKAVVTFRDGASIDFAKEA.

It belongs to the universal ribosomal protein uL23 family. Part of the 50S ribosomal subunit. Contacts protein L29, and trigger factor when it is bound to the ribosome.

In terms of biological role, one of the early assembly proteins it binds 23S rRNA. One of the proteins that surrounds the polypeptide exit tunnel on the outside of the ribosome. Forms the main docking site for trigger factor binding to the ribosome. The protein is Large ribosomal subunit protein uL23 of Leptospira borgpetersenii serovar Hardjo-bovis (strain JB197).